A 423-amino-acid polypeptide reads, in one-letter code: Glutamyl-tRNA reductase (423 aa).

Residues 49 to 52, Ser111, 116 to 118, and Gln122 contribute to the substrate site; these read TCNR and EPQ. Catalysis depends on Cys50, which acts as the Nucleophile. Residue 191 to 196 participates in NADP(+) binding; that stretch reads GAGEMS.

It belongs to the glutamyl-tRNA reductase family. In terms of assembly, homodimer.

The catalysed reaction is (S)-4-amino-5-oxopentanoate + tRNA(Glu) + NADP(+) = L-glutamyl-tRNA(Glu) + NADPH + H(+). It participates in porphyrin-containing compound metabolism; protoporphyrin-IX biosynthesis; 5-aminolevulinate from L-glutamyl-tRNA(Glu): step 1/2. Catalyzes the NADPH-dependent reduction of glutamyl-tRNA(Glu) to glutamate 1-semialdehyde (GSA). The protein is Glutamyl-tRNA reductase of Syntrophus aciditrophicus (strain SB).